Consider the following 341-residue polypeptide: Paired box protein Pax-9 (341 aa).

The segment at residues 4-130 is a DNA-binding region (paired); that stretch reads AFGEVNQLGG…SSISRILRNK (127 aa). A PAI subdomain region spans residues 7 to 63; that stretch reads EVNQLGGVFVNGRPLPNAIRLRIVELAQLGIRPCDISRQLRVSHGCVSKILARYNET. The interval 82–130 is RED subdomain; sequence TVVKHIRTYKQRDPGIFAWEIRDRLLADGVCDKYNVPSVSSISRILRNK. Positions 168 to 189 are interaction with KDM5B; sequence AAAAKVPTPPGVPAIPGSVAMP.

Interacts with KDM5B.

It is found in the nucleus. Transcription factor required for normal development of thymus, parathyroid glands, ultimobranchial bodies, teeth, skeletal elements of skull and larynx as well as distal limbs. The protein is Paired box protein Pax-9 (PAX9) of Daubentonia madagascariensis (Aye-aye).